A 189-amino-acid polypeptide reads, in one-letter code: Protein GrpE (189 aa).

Positions 1–21 (MADEQNLDNQNPETPEQSQAD) are disordered. A compositionally biased stretch (polar residues) spans 7–20 (LDNQNPETPEQSQA).

Belongs to the GrpE family. In terms of assembly, homodimer.

Its subcellular location is the cytoplasm. In terms of biological role, participates actively in the response to hyperosmotic and heat shock by preventing the aggregation of stress-denatured proteins, in association with DnaK and GrpE. It is the nucleotide exchange factor for DnaK and may function as a thermosensor. Unfolded proteins bind initially to DnaJ; upon interaction with the DnaJ-bound protein, DnaK hydrolyzes its bound ATP, resulting in the formation of a stable complex. GrpE releases ADP from DnaK; ATP binding to DnaK triggers the release of the substrate protein, thus completing the reaction cycle. Several rounds of ATP-dependent interactions between DnaJ, DnaK and GrpE are required for fully efficient folding. The polypeptide is Protein GrpE (Stutzerimonas stutzeri (strain A1501) (Pseudomonas stutzeri)).